A 294-amino-acid polypeptide reads, in one-letter code: DNA adenine methyltransferase YhdJ (294 aa).

Positions 275–294 are disordered; the sequence is TGNLSKRSRLSEVDPDLITK. Residues 283-294 are compositionally biased toward basic and acidic residues; that stretch reads RLSEVDPDLITK.

This sequence belongs to the N(4)/N(6)-methyltransferase family.

It catalyses the reaction a 2'-deoxyadenosine in DNA + S-adenosyl-L-methionine = an N(6)-methyl-2'-deoxyadenosine in DNA + S-adenosyl-L-homocysteine + H(+). In terms of biological role, a beta subtype methylase, recognizes the double-stranded sequence 5'-ATGCAT-3' and methylates A-5. In Escherichia coli (strain K12), this protein is DNA adenine methyltransferase YhdJ (yhdJ).